The following is a 233-amino-acid chain: Delta-actitoxin-Amc1a (233 aa).

Residues 1–18 (MKRIFIVALLFATCLVNA) form the signal peptide. Propeptides lie at residues 19-29 (KPSINDADIKR) and 30-33 (EPEP). At P39 the chain carries Hydroxyproline. Intrachain disulfides connect C40–C51 and C43–C58. 2 propeptides span residues 61–63 (RKR) and 64–67 (EPEP). P73 bears the Hydroxyproline mark. Disulfide bonds link C74–C85 and C77–C92. 2 propeptides span residues 95-97 (RKR) and 98-101 (EPEP). The residue at position 107 (P107) is a Hydroxyproline. 2 cysteine pairs are disulfide-bonded: C108-C119 and C111-C126. 2 consecutive propeptides follow at residues 129 to 131 (RKR) and 132 to 135 (EPEP). The residue at position 141 (P141) is a Hydroxyproline. Disulfide bonds link C142–C153 and C145–C160. 2 consecutive propeptides follow at residues 163–165 (RKR) and 166–169 (EPEP). At P175 the chain carries Hydroxyproline. 2 disulfides stabilise this stretch: C176/C187 and C179/C194. 2 consecutive propeptides follow at residues 197–199 (RKR) and 200–203 (EPEP). Hydroxyproline is present on P209. Intrachain disulfides connect C210–C221 and C213–C228. The propeptide occupies 231–233 (RKR).

It belongs to the sea anemone BBH family. In terms of processing, each Am I peptide may contain 2 disulfide bonds. Post-translationally, the precursor protein seems to be processed in the following sequence: release of the signal peptide and of the propeptide, production of six identical 34-residue peptides by cleavage between Arg and Glu, release of four N-terminal and three C-terminal residues from each peptide and hydroxylation of each Pro in position 6 of the resulting 27-residue peptides.

The protein localises to the secreted. It is found in the nematocyst. Its function is as follows. May inhibit voltage-gated sodium channels (Nav). The sequence is that of Delta-actitoxin-Amc1a from Antheopsis maculata (Sea anemone).